We begin with the raw amino-acid sequence, 408 residues long: Large ribosomal subunit protein uL4 (408 aa).

The interval 58–98 is disordered; the sequence is PYAVSKKAGHQTSAESWGTGRAVSRIPRVPGGGTHRAGQGA.

It belongs to the universal ribosomal protein uL4 family.

This is Large ribosomal subunit protein uL4 (RPL4) from Prunus armeniaca (Apricot).